The primary structure comprises 185 residues: Elongation factor P (185 aa).

The protein belongs to the elongation factor P family.

Its subcellular location is the cytoplasm. Its pathway is protein biosynthesis; polypeptide chain elongation. Functionally, involved in peptide bond synthesis. Stimulates efficient translation and peptide-bond synthesis on native or reconstituted 70S ribosomes in vitro. Probably functions indirectly by altering the affinity of the ribosome for aminoacyl-tRNA, thus increasing their reactivity as acceptors for peptidyl transferase. This chain is Elongation factor P, found in Caldanaerobacter subterraneus subsp. tengcongensis (strain DSM 15242 / JCM 11007 / NBRC 100824 / MB4) (Thermoanaerobacter tengcongensis).